The following is a 310-amino-acid chain: Ribonuclease Z (310 aa).

The Zn(2+) site is built by histidine 63, histidine 65, aspartate 67, histidine 68, histidine 141, aspartate 212, and histidine 270. Catalysis depends on aspartate 67, which acts as the Proton acceptor.

It belongs to the RNase Z family. In terms of assembly, homodimer. Zn(2+) serves as cofactor.

The enzyme catalyses Endonucleolytic cleavage of RNA, removing extra 3' nucleotides from tRNA precursor, generating 3' termini of tRNAs. A 3'-hydroxy group is left at the tRNA terminus and a 5'-phosphoryl group is left at the trailer molecule.. Its function is as follows. Zinc phosphodiesterase, which displays some tRNA 3'-processing endonuclease activity. Probably involved in tRNA maturation, by removing a 3'-trailer from precursor tRNA. The chain is Ribonuclease Z from Limosilactobacillus fermentum (strain NBRC 3956 / LMG 18251) (Lactobacillus fermentum).